Here is a 331-residue protein sequence, read N- to C-terminus: ESX-3 secretion system protein EccE3 (331 aa).

2 helical membrane passes run Gly-11–Ser-31 and Leu-37–Phe-57.

Belongs to the EccE family. As to quaternary structure, part of the ESX-3 / type VII secretion system (T7SS), which is composed of cytosolic and membrane components. The ESX-3 membrane complex is composed of EccB3, EccC3, EccD3 and EccE3.

It is found in the cell inner membrane. Functionally, part of the ESX-3 specialized secretion system, which is important for iron and zinc uptake or homeostasis. The polypeptide is ESX-3 secretion system protein EccE3 (Mycobacterium tuberculosis (strain ATCC 25618 / H37Rv)).